The primary structure comprises 294 residues: 4-hydroxy-tetrahydrodipicolinate synthase (294 aa).

Thr-45 is a binding site for pyruvate. Tyr-133 functions as the Proton donor/acceptor in the catalytic mechanism. Lys-161 functions as the Schiff-base intermediate with substrate in the catalytic mechanism. Ile-203 provides a ligand contact to pyruvate.

Belongs to the DapA family. In terms of assembly, homotetramer; dimer of dimers.

It localises to the cytoplasm. The catalysed reaction is L-aspartate 4-semialdehyde + pyruvate = (2S,4S)-4-hydroxy-2,3,4,5-tetrahydrodipicolinate + H2O + H(+). The protein operates within amino-acid biosynthesis; L-lysine biosynthesis via DAP pathway; (S)-tetrahydrodipicolinate from L-aspartate: step 3/4. In terms of biological role, catalyzes the condensation of (S)-aspartate-beta-semialdehyde [(S)-ASA] and pyruvate to 4-hydroxy-tetrahydrodipicolinate (HTPA). This is 4-hydroxy-tetrahydrodipicolinate synthase from Buchnera aphidicola subsp. Acyrthosiphon pisum (strain 5A).